The chain runs to 164 residues: UPF0225 protein Shewmr7_1921 (164 aa).

Belongs to the UPF0225 family.

This chain is UPF0225 protein Shewmr7_1921, found in Shewanella sp. (strain MR-7).